Consider the following 184-residue polypeptide: Photosystem I assembly protein Ycf4 (184 aa).

Helical transmembrane passes span 24 to 44 (WAFILFLGSLGFLLVGTSSYI) and 57 to 77 (IIFFPQGIVMSFYGIAGLFIS).

The protein belongs to the Ycf4 family.

Its subcellular location is the plastid. It localises to the chloroplast thylakoid membrane. Its function is as follows. Seems to be required for the assembly of the photosystem I complex. This is Photosystem I assembly protein Ycf4 from Buxus microphylla (Littleleaf boxwood).